Consider the following 505-residue polypeptide: Protein nucleotidyltransferase YdiU (505 aa).

G102, G104, R105, K125, D137, G138, R188, and R195 together coordinate ATP. D264 functions as the Proton acceptor in the catalytic mechanism. Residues N265 and D274 each coordinate Mg(2+). Position 274 (D274) interacts with ATP.

This sequence belongs to the SELO family. It depends on Mg(2+) as a cofactor. Requires Mn(2+) as cofactor.

The enzyme catalyses L-seryl-[protein] + ATP = 3-O-(5'-adenylyl)-L-seryl-[protein] + diphosphate. It carries out the reaction L-threonyl-[protein] + ATP = 3-O-(5'-adenylyl)-L-threonyl-[protein] + diphosphate. The catalysed reaction is L-tyrosyl-[protein] + ATP = O-(5'-adenylyl)-L-tyrosyl-[protein] + diphosphate. It catalyses the reaction L-histidyl-[protein] + UTP = N(tele)-(5'-uridylyl)-L-histidyl-[protein] + diphosphate. The enzyme catalyses L-seryl-[protein] + UTP = O-(5'-uridylyl)-L-seryl-[protein] + diphosphate. It carries out the reaction L-tyrosyl-[protein] + UTP = O-(5'-uridylyl)-L-tyrosyl-[protein] + diphosphate. Nucleotidyltransferase involved in the post-translational modification of proteins. It can catalyze the addition of adenosine monophosphate (AMP) or uridine monophosphate (UMP) to a protein, resulting in modifications known as AMPylation and UMPylation. The polypeptide is Protein nucleotidyltransferase YdiU (Nitrobacter winogradskyi (strain ATCC 25391 / DSM 10237 / CIP 104748 / NCIMB 11846 / Nb-255)).